The sequence spans 206 residues: Imidazole glycerol phosphate synthase subunit HisH (206 aa).

One can recognise a Glutamine amidotransferase type-1 domain in the interval 5-206; sequence SVVVLDYGSG…AVLRNWIERL (202 aa). Cysteine 83 (nucleophile) is an active-site residue. Residues histidine 187 and glutamate 189 contribute to the active site.

As to quaternary structure, heterodimer of HisH and HisF.

It localises to the cytoplasm. It catalyses the reaction 5-[(5-phospho-1-deoxy-D-ribulos-1-ylimino)methylamino]-1-(5-phospho-beta-D-ribosyl)imidazole-4-carboxamide + L-glutamine = D-erythro-1-(imidazol-4-yl)glycerol 3-phosphate + 5-amino-1-(5-phospho-beta-D-ribosyl)imidazole-4-carboxamide + L-glutamate + H(+). The enzyme catalyses L-glutamine + H2O = L-glutamate + NH4(+). It functions in the pathway amino-acid biosynthesis; L-histidine biosynthesis; L-histidine from 5-phospho-alpha-D-ribose 1-diphosphate: step 5/9. Functionally, IGPS catalyzes the conversion of PRFAR and glutamine to IGP, AICAR and glutamate. The HisH subunit catalyzes the hydrolysis of glutamine to glutamate and ammonia as part of the synthesis of IGP and AICAR. The resulting ammonia molecule is channeled to the active site of HisF. The chain is Imidazole glycerol phosphate synthase subunit HisH from Mycolicibacterium paratuberculosis (strain ATCC BAA-968 / K-10) (Mycobacterium paratuberculosis).